The following is a 239-amino-acid chain: Nicotinamide riboside transporter PnuC (239 aa).

Residues 1-21 lie on the Cytoplasmic side of the membrane; it reads MDFFSVQNILVHIPIGAGGYD. A helical membrane pass occupies residues 22-42; that stretch reads LSWIEAVGTIAGLLCIGLASL. The Periplasmic portion of the chain corresponds to 43 to 48; the sequence is EKISNY. The helical transmembrane segment at 49–68 threads the bilayer; sequence FFGLINVTLFGIIFFQIQLY. The Cytoplasmic segment spans residues 69 to 71; sequence ASL. The chain crosses the membrane as a helical span at residues 72–89; it reads LLQVFFFAANIYGWYAWS. The Periplasmic portion of the chain corresponds to 90-109; the sequence is RQTSQNEAELKIRWLPLPKA. A helical membrane pass occupies residues 110-127; it reads LSWLAVCVVSIGLMTVFI. Over 128-157 the chain is Cytoplasmic; that stretch reads NPVFAFLTRVAVMIMQALGLQVVMPELQPD. The helical transmembrane segment at 158–177 threads the bilayer; it reads AFPFWDSCMMVLSIVAMILM. Residues 178 to 183 lie on the Periplasmic side of the membrane; it reads TRKYVE. A helical membrane pass occupies residues 184–206; the sequence is NWLLWVIINVISVVIFALQGVYA. Tryptophan 188 and asparagine 192 together coordinate beta-nicotinamide D-riboside. Residues 207-239 are Cytoplasmic-facing; it reads MSLEYIILTFIALNGSRMWINSARERGSRALSH.

The protein belongs to the nicotinamide ribonucleoside (NR) uptake permease (TC 4.B.1) family.

The protein localises to the cell inner membrane. Functionally, required for nicotinamide riboside transport across the inner membrane. This is Nicotinamide riboside transporter PnuC (pnuC) from Escherichia coli (strain K12).